The primary structure comprises 208 residues: MSILQKLVLASGSPRRIELLQQAGIEPDRILPADIDETPLRAEHPRSLAKRLSTEKAEKAFASLKTETGYAPSFVLAADTVVAVGRRILPKAETLDDAANCLGLLSGRSHRVYSGICLITPGGKLRQRLVETRVRFKRLPREEIEAYVASGEWRGKAGGYAVQGLAGSFVVKLVGSYTNIVGLPLYETVALLSGEGFKIHQSWLTARP.

Residue Asp-79 is the Proton acceptor of the active site.

Belongs to the Maf family. YhdE subfamily. It depends on a divalent metal cation as a cofactor.

It localises to the cytoplasm. The catalysed reaction is dTTP + H2O = dTMP + diphosphate + H(+). The enzyme catalyses UTP + H2O = UMP + diphosphate + H(+). Functionally, nucleoside triphosphate pyrophosphatase that hydrolyzes dTTP and UTP. May have a dual role in cell division arrest and in preventing the incorporation of modified nucleotides into cellular nucleic acids. The chain is dTTP/UTP pyrophosphatase from Mesorhizobium japonicum (strain LMG 29417 / CECT 9101 / MAFF 303099) (Mesorhizobium loti (strain MAFF 303099)).